Here is a 282-residue protein sequence, read N- to C-terminus: MEMO1 family protein Msed_2139 (282 aa).

Belongs to the MEMO1 family.

In Metallosphaera sedula (strain ATCC 51363 / DSM 5348 / JCM 9185 / NBRC 15509 / TH2), this protein is MEMO1 family protein Msed_2139.